A 124-amino-acid polypeptide reads, in one-letter code: uncharacterized protein (124 aa).

The chain crosses the membrane as a helical span at residues 70–90 (LLYLALVLLLVVILSTAFFSI).

It is found in the membrane. This is an uncharacterized protein from Saccharomyces cerevisiae (strain ATCC 204508 / S288c) (Baker's yeast).